The primary structure comprises 692 residues: Aspartate--tRNA ligase, mitochondrial (692 aa).

The N-terminal 61 residues, 1–61 (MNRVILKDSK…RNFTNTINNN (61 aa)), are a transit peptide targeting the mitochondrion. Glu-264 is an L-aspartate binding site. The segment at 287–290 (QQYK) is aspartate. Arg-309 is an L-aspartate binding site. ATP is bound by residues 309-311 (RDE) and Glu-590. An L-aspartate-binding site is contributed by Arg-597. 642–645 (GFDR) serves as a coordination point for ATP.

It belongs to the class-II aminoacyl-tRNA synthetase family. Type 1 subfamily.

It localises to the mitochondrion matrix. The catalysed reaction is tRNA(Asp) + L-aspartate + ATP = L-aspartyl-tRNA(Asp) + AMP + diphosphate. This is Aspartate--tRNA ligase, mitochondrial (maspS) from Dictyostelium discoideum (Social amoeba).